A 485-amino-acid chain; its full sequence is Glucagon receptor (485 aa).

Residues 1–26 (MPLTQLHCPHLLLLLLVLSCLPEAPS) form the signal peptide. Residues 27-137 (AQVMDFLFEK…EIEVQKGVAK (111 aa)) are Extracellular-facing. Intrachain disulfides connect Cys-44-Cys-68, Cys-59-Cys-101, and Cys-82-Cys-122. 5 N-linked (GlcNAc...) asparagine glycosylation sites follow: Asn-47, Asn-60, Asn-75, Asn-79, and Asn-118. The chain crosses the membrane as a helical span at residues 138–162 (MYSSQQVMYTVGYSLSLGALLLALV). Residues 163–174 (ILLGLRKLHCTR) lie on the Cytoplasmic side of the membrane. Residues 175–199 (NYIHGNLFASFVLKAGSVLVIDWLL) form a helical membrane-spanning segment. At 200-226 (KTRYSQKIGDDLSVSVWLSDGAMAGCR) the chain is on the extracellular side. An intrachain disulfide couples Cys-225 to Cys-295. Residues 227-250 (VATVIMQYGIIANYCWLLVEGVYL) traverse the membrane as a helical segment. At 251–264 (YSLLSLATFSERSF) the chain is on the cytoplasmic side. Residues 265 to 286 (FSLYLGIGWGAPLLFVIPWVVV) traverse the membrane as a helical segment. At 287–304 (KCLFENVQCWTSNDNMGF) the chain is on the extracellular side. Residues 305–327 (WWILRIPVFLALLINFFIFVHII) form a helical membrane-spanning segment. At 328 to 351 (HLLVAKLRAHQMHYADYKFRLARS) the chain is on the cytoplasmic side. Positions 351–354 (STLT) are important for allosteric inhibitor binding. The helical transmembrane segment at 352–370 (TLTLIPLLGVHEVVFAFVT) threads the bilayer. Residues 371–382 (DEHAQGTLRSTK) lie on the Extracellular side of the membrane. The helical transmembrane segment at 383 to 403 (LFFDLFLSSFQGLLVAVLYCF) threads the bilayer. At 404 to 485 (LNKEVQAELM…SLPRLADSPT (82 aa)) the chain is on the cytoplasmic side. Residues 457-475 (AGSSSGTGCVPSMETSLAS) show a composition bias toward polar residues. Residues 457-485 (AGSSSGTGCVPSMETSLASSLPRLADSPT) form a disordered region. A phosphoserine mark is found at Ser-460 and Ser-476.

This sequence belongs to the G-protein coupled receptor 2 family. Post-translationally, ligand-binding promotes phosphorylation of serine residues in the C-terminal cytoplasmic domain. Phosphorylation is important for receptor endocytosis after ligand-binding. Expressed predominantly in liver, kidney, adrenal, lung and stomach, while lower levels of expression are detected in brown and white adipose tissue, cerebellum, duodenum and heart.

It localises to the cell membrane. In terms of biological role, G-protein coupled receptor for glucagon that plays a central role in the regulation of blood glucose levels and glucose homeostasis. Regulates the rate of hepatic glucose production by promoting glycogen hydrolysis and gluconeogenesis. Plays an important role in mediating the responses to fasting. Ligand binding causes a conformation change that triggers signaling via guanine nucleotide-binding proteins (G proteins) and modulates the activity of down-stream effectors, such as adenylate cyclase. Promotes activation of adenylate cyclase. Besides, plays a role in signaling via a phosphatidylinositol-calcium second messenger system. The protein is Glucagon receptor (Gcgr) of Mus musculus (Mouse).